The sequence spans 392 residues: Serpin B11 (392 aa).

The interval 341–365 (EEGTEAAAATGDSIAVKSLPMRAQF) is RCL.

This sequence belongs to the serpin family. Ov-serpin subfamily. In terms of tissue distribution, detected in a restricted number of tissues, including lung, placenta, prostate, and tonsil.

Its subcellular location is the cytoplasm. Functionally, has no serine protease inhibitory activity, probably due to variants in the scaffold impairing conformational change. The polypeptide is Serpin B11 (SERPINB11) (Homo sapiens (Human)).